Reading from the N-terminus, the 423-residue chain is Histidine--tRNA ligase 2 (423 aa).

Belongs to the class-II aminoacyl-tRNA synthetase family. Homodimer.

The protein resides in the cytoplasm. The enzyme catalyses tRNA(His) + L-histidine + ATP = L-histidyl-tRNA(His) + AMP + diphosphate + H(+). This is Histidine--tRNA ligase 2 from Bacillus anthracis.